The primary structure comprises 431 residues: Histidinol dehydrogenase 1 (431 aa).

NAD(+) contacts are provided by Tyr127, Gln188, and Asn211. Substrate contacts are provided by Ser234, Gln256, and His259. Residues Gln256 and His259 each contribute to the Zn(2+) site. Catalysis depends on proton acceptor residues Glu324 and His325. Substrate contacts are provided by His325, Asp358, Glu412, and His417. Residue Asp358 coordinates Zn(2+). His417 provides a ligand contact to Zn(2+).

This sequence belongs to the histidinol dehydrogenase family. Zn(2+) serves as cofactor.

It catalyses the reaction L-histidinol + 2 NAD(+) + H2O = L-histidine + 2 NADH + 3 H(+). It functions in the pathway amino-acid biosynthesis; L-histidine biosynthesis; L-histidine from 5-phospho-alpha-D-ribose 1-diphosphate: step 9/9. Catalyzes the sequential NAD-dependent oxidations of L-histidinol to L-histidinaldehyde and then to L-histidine. This Trichormus variabilis (strain ATCC 29413 / PCC 7937) (Anabaena variabilis) protein is Histidinol dehydrogenase 1.